The sequence spans 146 residues: Ribosome-binding factor A (146 aa).

Positions 125–146 (RDLDADDDKTKDDRAKDDKDSE) are disordered.

It belongs to the RbfA family. As to quaternary structure, monomer. Binds 30S ribosomal subunits, but not 50S ribosomal subunits or 70S ribosomes.

The protein localises to the cytoplasm. Functionally, one of several proteins that assist in the late maturation steps of the functional core of the 30S ribosomal subunit. Associates with free 30S ribosomal subunits (but not with 30S subunits that are part of 70S ribosomes or polysomes). Required for efficient processing of 16S rRNA. May interact with the 5'-terminal helix region of 16S rRNA. The chain is Ribosome-binding factor A from Mesorhizobium japonicum (strain LMG 29417 / CECT 9101 / MAFF 303099) (Mesorhizobium loti (strain MAFF 303099)).